Consider the following 396-residue polypeptide: Serine/threonine-protein kinase GRIK1 (396 aa).

The disordered stretch occupies residues 22-65; the sequence is ERSRHSPNPYDDDTYSHDSGETSNPGGDDEEGEEEEEVEELSRS. A compositionally biased stretch (acidic residues) spans 48 to 60; the sequence is GDDEEGEEEEEVE. In terms of domain architecture, Protein kinase spans 108–369; the sequence is FVRERKIGSG…LKAVAEHPWI (262 aa). ATP contacts are provided by residues 114 to 122 and K137; that span reads IGSGSYGKV. Residue T154 is modified to Phosphothreonine; by autocatalysis. The active-site Proton acceptor is the D239. S261 is subject to Phosphoserine; by KIN10.

This sequence belongs to the protein kinase superfamily. Ser/Thr protein kinase family. As to quaternary structure, associates with the SNF1-related protein kinase (SnRK) complex. Interacts with AL1, a geminivirus (TGMV) protein essential for viral replication. In terms of tissue distribution, expressed in shoot apical meristem, leaf primordium and emerging petiole (at protein level).

It is found in the cytoplasm. The protein resides in the nucleus. It catalyses the reaction L-seryl-[protein] + ATP = O-phospho-L-seryl-[protein] + ADP + H(+). The catalysed reaction is L-threonyl-[protein] + ATP = O-phospho-L-threonyl-[protein] + ADP + H(+). Its activity is regulated as follows. Activated when autophosphorylated at Thr-154 and inactivated when phosphorylated at Ser-261 by SnRK1.1/KIN10. Its function is as follows. Activates SnRK1.1/KIN10 and SnRK1.2/KIN11 by phosphorylation of their activation-loop 'Thr-198' and 'Thr-176', respectively. Required for the regulation by SnRK1 kinases of the transcription of a large set of genes, the modification the activity of metabolic enzymes, and the control of various nutrient-responsive cellular developmental processes. The protein is Serine/threonine-protein kinase GRIK1 (GRIK1) of Arabidopsis thaliana (Mouse-ear cress).